The following is a 92-amino-acid chain: MPRSLKKGPFIDLHLLKKVEKAVESADKKPIKTWSRRSMIIPDMIGLTIAVHNGRQHVPVYVSDEMVGHKLGEFAPTRTYRGHAADKKAKKK.

The protein belongs to the universal ribosomal protein uS19 family.

Protein S19 forms a complex with S13 that binds strongly to the 16S ribosomal RNA. The protein is Small ribosomal subunit protein uS19 of Tolumonas auensis (strain DSM 9187 / NBRC 110442 / TA 4).